The sequence spans 353 residues: Paraneoplastic antigen Ma1 (353 aa).

Belongs to the PNMA family. As to expression, testis- and brain-specific. In some cancer patients, specifically expressed by paraneoplastic tumor cells.

It is found in the nucleus. Its subcellular location is the nucleolus. The polypeptide is Paraneoplastic antigen Ma1 (PNMA1) (Homo sapiens (Human)).